A 426-amino-acid polypeptide reads, in one-letter code: Phosphomethylpyrimidine synthase (426 aa).

Residues Asn65, Met94, Tyr123, His162, 184-186, 225-228, and Glu264 each bind substrate; these read SRG and DGMR. His268 is a Zn(2+) binding site. Tyr291 is a substrate binding site. Residue His332 coordinates Zn(2+). Residues Cys408, Cys411, and Cys415 each coordinate [4Fe-4S] cluster.

Belongs to the ThiC family. It depends on [4Fe-4S] cluster as a cofactor.

It catalyses the reaction 5-amino-1-(5-phospho-beta-D-ribosyl)imidazole + S-adenosyl-L-methionine = 4-amino-2-methyl-5-(phosphooxymethyl)pyrimidine + CO + 5'-deoxyadenosine + formate + L-methionine + 3 H(+). It functions in the pathway cofactor biosynthesis; thiamine diphosphate biosynthesis. In terms of biological role, catalyzes the synthesis of the hydroxymethylpyrimidine phosphate (HMP-P) moiety of thiamine from aminoimidazole ribotide (AIR) in a radical S-adenosyl-L-methionine (SAM)-dependent reaction. The polypeptide is Phosphomethylpyrimidine synthase (Methanococcus aeolicus (strain ATCC BAA-1280 / DSM 17508 / OCM 812 / Nankai-3)).